Reading from the N-terminus, the 139-residue chain is MPIHLEIVTAERVVLSDDVDMINAPTKDGRVGILPRHAPLLTILEVGELDIVKDGVTTPFAISGGFMEVLPNRVTILADTAERADEIDEARAEAARRAAEQRIAERKSAQDLALAEAELRRALVQLKVAQLKKIRRERD.

It belongs to the ATPase epsilon chain family. As to quaternary structure, F-type ATPases have 2 components, CF(1) - the catalytic core - and CF(0) - the membrane proton channel. CF(1) has five subunits: alpha(3), beta(3), gamma(1), delta(1), epsilon(1). CF(0) has three main subunits: a, b and c.

It localises to the cell membrane. Functionally, produces ATP from ADP in the presence of a proton gradient across the membrane. The chain is ATP synthase epsilon chain from Roseiflexus sp. (strain RS-1).